The following is a 171-amino-acid chain: Cytochrome c oxidase subunit 5, mitochondrial (171 aa).

The transit peptide at 1-27 (MLRTPTVSALVRNVAVRAAKPTMAVRA) directs the protein to the mitochondrion. The Mitochondrial matrix segment spans residues 28–100 (ASTMPISNPT…ALPPPGEQKK (73 aa)). Residues 101 to 123 (VLAYTVAGVFLSFVIFATMRAFA) traverse the membrane as a helical segment. Residues 124 to 171 (KPPPATMTKEWQEATNEFLKAQKSDPLTGLTSEGYNGKGHVQSPSASA) are Mitochondrial intermembrane-facing. The disordered stretch occupies residues 145-171 (QKSDPLTGLTSEGYNGKGHVQSPSASA).

This sequence belongs to the cytochrome c oxidase IV family. In terms of assembly, component of the cytochrome c oxidase (complex IV, CIV), a multisubunit enzyme composed of 11 subunits. The complex is composed of a catalytic core of 3 subunits Cox1, Cox2 and Cox3, encoded in the mitochondrial DNA, and 8 supernumerary subunits Cox4, Cox5a/Cox5, Cox6, Cox7, Cox8, Cox7a/Cox9, Cox6b/Cox12 and Cox6a/Cox13, which are encoded in the nuclear genome. The complex exists as a monomer or a dimer and forms respiratory supercomplexes (SCs) in the inner mitochondrial membrane with NADH-ubiquinone oxidoreductase (complex I, CI) and ubiquinol-cytochrome c oxidoreductase (cytochrome b-c1 complex, complex III, CIII), resulting in various different assemblies (supercomplexes I(1)IV(1), I(1)III(3)IV(2), III(2)IV(1) and III(2)IV(2) as well as larger supercomplexes of compositions like I(1)III(2)IV(5-6)).

The protein localises to the mitochondrion inner membrane. The protein operates within energy metabolism; oxidative phosphorylation. Its function is as follows. Component of the cytochrome c oxidase, the last enzyme in the mitochondrial electron transport chain which drives oxidative phosphorylation. The respiratory chain contains 3 multisubunit complexes succinate dehydrogenase (complex II, CII), ubiquinol-cytochrome c oxidoreductase (cytochrome b-c1 complex, complex III, CIII) and cytochrome c oxidase (complex IV, CIV), that cooperate to transfer electrons derived from NADH and succinate to molecular oxygen, creating an electrochemical gradient over the inner membrane that drives transmembrane transport and the ATP synthase. Cytochrome c oxidase is the component of the respiratory chain that catalyzes the reduction of oxygen to water. Electrons originating from reduced cytochrome c in the intermembrane space (IMS) are transferred via the dinuclear copper A center (CU(A)) of Cox2 and heme A of Cox1 to the active site in Cox1, a binuclear center (BNC) formed by heme A3 and copper B (CU(B)). The BNC reduces molecular oxygen to 2 water molecules using 4 electrons from cytochrome c in the IMS and 4 protons from the mitochondrial matrix. The chain is Cytochrome c oxidase subunit 5, mitochondrial (cya-4) from Neurospora crassa (strain ATCC 24698 / 74-OR23-1A / CBS 708.71 / DSM 1257 / FGSC 987).